The primary structure comprises 92 residues: Muscle LIM protein 1 (92 aa).

In terms of domain architecture, LIM zinc-binding spans 11–62; it reads CPACGKSVYAAEERVAGGYKFHKTCFKCSMCNKALDSTNCTEHEKELFCKNC. Positions 65–70 match the Nuclear localization signal motif; it reads RKYGPK.

In the embryo, expression is restricted to the somatic, visceral, and pharyngeal muscles. Within the somatic musculature, MLP60 is distributed throughout the muscle fibers. There is no expression in cardiac mesoderm or in fat body.

It is found in the cytoplasm. The protein resides in the nucleus. In terms of biological role, positive regulator of myogenesis. The polypeptide is Muscle LIM protein 1 (Mlp60A) (Drosophila melanogaster (Fruit fly)).